Here is a 216-residue protein sequence, read N- to C-terminus: MKINTVLFDLDGTLINTNELIISSFLHTLHTYYPNQYKREDVLPFIGPSLHDTFSKIDESKVEELITSYRQFNHDHHDELVEEYETVYETVQELKKQGYKVGIVTTKARQTVEMGLKLSKLDEFFDVVVTIDDVEHVKPHPEPLQKALQLLDAKPEEALMVGDNHHDIVGGQNAGTKTAAVSWTLKGRAYLETYKPDFMLDKMSDLLLILSDMNRS.

The Nucleophile role is filled by Asp9.

Belongs to the HAD-like hydrolase superfamily. PpaX family. The cofactor is Mg(2+).

The enzyme catalyses diphosphate + H2O = 2 phosphate + H(+). Functionally, hydrolyzes pyrophosphate formed during P-Ser-HPr dephosphorylation by HPrK/P. Might play a role in controlling the intracellular pyrophosphate pool. This Bacillus anthracis (strain A0248) protein is Pyrophosphatase PpaX.